The chain runs to 321 residues: Glucokinase (321 aa).

8–13 contacts ATP; that stretch reads GDVGGT.

This sequence belongs to the bacterial glucokinase family.

It localises to the cytoplasm. It catalyses the reaction D-glucose + ATP = D-glucose 6-phosphate + ADP + H(+). This Salmonella agona (strain SL483) protein is Glucokinase.